The primary structure comprises 520 residues: Apolipoprotein N-acyltransferase (520 aa).

Transmembrane regions (helical) follow at residues Ile12–Phe32, Asp33–Glu53, Leu58–Val78, Val93–Ile113, Ala122–Phe142, Val168–Ile188, and Trp193–Ser213. The CN hydrolase domain occupies Ala232 to Ala479. The active-site Proton acceptor is the Glu272. Lys338 is a catalytic residue. The Nucleophile role is filled by Cys390. Residues Thr484–Met504 form a helical membrane-spanning segment.

This sequence belongs to the CN hydrolase family. Apolipoprotein N-acyltransferase subfamily.

Its subcellular location is the cell inner membrane. The catalysed reaction is N-terminal S-1,2-diacyl-sn-glyceryl-L-cysteinyl-[lipoprotein] + a glycerophospholipid = N-acyl-S-1,2-diacyl-sn-glyceryl-L-cysteinyl-[lipoprotein] + a 2-acyl-sn-glycero-3-phospholipid + H(+). It functions in the pathway protein modification; lipoprotein biosynthesis (N-acyl transfer). In terms of biological role, catalyzes the phospholipid dependent N-acylation of the N-terminal cysteine of apolipoprotein, the last step in lipoprotein maturation. This Pasteurella multocida (strain Pm70) protein is Apolipoprotein N-acyltransferase.